The chain runs to 798 residues: Integrin beta-1-A (798 aa).

A signal peptide spans 1–21; it reads MAHYPVFTVGLLTCLVLCINA. Residues 22-727 lie on the Extracellular side of the membrane; sequence QQGGTECLKA…VKEPECPSGP (706 aa). The 51-residue stretch at 27–77 folds into the PSI domain; that stretch reads ECLKANAKSCGECIQAGPNCGWCTKVDFLQEGEPTSARCDDLAALKSKGCP. Cystine bridges form between C28-C46, C36-C464, C39-C65, C49-C76, C206-C212, C260-C300, C400-C414, C434-C462, C466-C486, C477-C489, C491-C500, C502-C533, C516-C531, C525-C536, C538-C553, C555-C576, C560-C574, C568-C579, C581-C590, C592-C615, C599-C613, C607-C618, C620-C630, C633-C636, C640-C691, C646-C665, C649-C661, and C699-C723. The interval 76 to 106 is disordered; sequence CPEDDIQNPRGRKQKLKDIPITSKGKGERMD. 2 N-linked (GlcNAc...) asparagine glycosylation sites follow: N109 and N131. Residues 139–377 enclose the VWFA domain; sequence DYPIDLYYLM…QLIIDSYNSL (239 aa). Residues S151 and S153 each contribute to the Mg(2+) site. Positions 153, 156, 157, and 188 each coordinate Ca(2+). N-linked (GlcNAc...) asparagine glycosylation is found at N211 and N223. Residues N243, D245, P247, and E248 each contribute to the Ca(2+) site. E248 serves as a coordination point for Mg(2+). N-linked (GlcNAc...) asparagine glycans are attached at residues N268 and N362. Residue N416 is glycosylated (N-linked (GlcNAc...) asparagine). I-EGF domains are found at residues 466-501, 502-554, 555-591, and 592-631; these read CQDK…KECE, CSTD…KYCE, CDNF…SACD, and CSED…PTCE. N481 carries N-linked (GlcNAc...) asparagine glycosylation. N520 carries an N-linked (GlcNAc...) asparagine glycan. A glycan (N-linked (GlcNAc...) asparagine) is linked at N584. N-linked (GlcNAc...) asparagine glycosylation occurs at N669. Residues 728–751 traverse the membrane as a helical segment; that stretch reads DIIPIVAGVVAGIVLIGLALLLIW. At 752–798 the chain is on the cytoplasmic side; it reads KLLMIIHDRREFAKFEKEKMNAKWDTGENPIYKSAVTTVVNPKYEGK. Position 783 is a phosphotyrosine (Y783).

It belongs to the integrin beta chain family. Heterodimer of an alpha and a beta subunit.

It localises to the cell membrane. The protein localises to the cell projection. Its subcellular location is the invadopodium membrane. It is found in the ruffle membrane. The protein resides in the melanosome. It localises to the cleavage furrow. The protein localises to the lamellipodium. Its subcellular location is the ruffle. Beta integrins associate with alpha subunits to form receptor complexes that recognize the sequence R-G-D in a wide array of ligands. May be involved in osteoblast compaction. May play role in myoblast differentiation and fusion during skeletal myogenesis. In Xenopus laevis (African clawed frog), this protein is Integrin beta-1-A (itgb1-a).